The primary structure comprises 522 residues: Probable cytosolic Fe-S cluster assembly factor narfl (522 aa).

Cysteine 26, cysteine 73, cysteine 76, cysteine 79, cysteine 205, cysteine 281, cysteine 439, and cysteine 443 together coordinate [4Fe-4S] cluster.

This sequence belongs to the NARF family.

Component of the cytosolic iron-sulfur (Fe/S) protein assembly machinery. Required for maturation of extramitochondrial Fe/S proteins. This Dictyostelium discoideum (Social amoeba) protein is Probable cytosolic Fe-S cluster assembly factor narfl (narfl).